The sequence spans 70 residues: Sec-independent protein translocase protein TatA (70 aa).

Residues 1-21 (MGSFSIWHWLIVLVVVLLIFG) traverse the membrane as a helical segment. The segment at 46–70 (DAPKISESDKGGHTIDAEVKDKQNS) is disordered.

The protein belongs to the TatA/E family. The Tat system comprises two distinct complexes: a TatABC complex, containing multiple copies of TatA, TatB and TatC subunits, and a separate TatA complex, containing only TatA subunits. Substrates initially bind to the TatABC complex, which probably triggers association of the separate TatA complex to form the active translocon.

The protein localises to the cell inner membrane. Part of the twin-arginine translocation (Tat) system that transports large folded proteins containing a characteristic twin-arginine motif in their signal peptide across membranes. TatA could form the protein-conducting channel of the Tat system. This chain is Sec-independent protein translocase protein TatA, found in Thiobacillus denitrificans (strain ATCC 25259 / T1).